Here is a 475-residue protein sequence, read N- to C-terminus: UDP-glucosyltransferase 102 (475 aa).

UDP-alpha-D-glucose contacts are provided by residues Ser278, 344–345 (WA), 362–370 (HCGWNSTLE), and 384–387 (YGEQ).

It belongs to the UDP-glycosyltransferase family.

Its pathway is secondary metabolite biosynthesis; terpenoid biosynthesis. In terms of biological role, probable component of the triterpene saponins (e.g. ginsenosides) biosynthetic pathway. No detectable activity toward protopanaxatriol (PPT). The polypeptide is UDP-glucosyltransferase 102 (UGT102) (Panax ginseng (Korean ginseng)).